The following is a 267-amino-acid chain: Phosphate import ATP-binding protein PstB 2 (267 aa).

The 242-residue stretch at 21-262 (LSTKDVHVYY…AKLQSTNDYV (242 aa)) folds into the ABC transporter domain. Position 53–60 (53–60 (GPSGSGKS)) interacts with ATP.

It belongs to the ABC transporter superfamily. Phosphate importer (TC 3.A.1.7) family. As to quaternary structure, the complex is composed of two ATP-binding proteins (PstB), two transmembrane proteins (PstC and PstA) and a solute-binding protein (PstS).

The protein localises to the cell membrane. The catalysed reaction is phosphate(out) + ATP + H2O = ADP + 2 phosphate(in) + H(+). Part of the ABC transporter complex PstSACB involved in phosphate import. Responsible for energy coupling to the transport system. In Streptococcus pneumoniae serotype 4 (strain ATCC BAA-334 / TIGR4), this protein is Phosphate import ATP-binding protein PstB 2.